We begin with the raw amino-acid sequence, 415 residues long: Gamma-glutamyl phosphate reductase (415 aa).

It belongs to the gamma-glutamyl phosphate reductase family.

It localises to the cytoplasm. It catalyses the reaction L-glutamate 5-semialdehyde + phosphate + NADP(+) = L-glutamyl 5-phosphate + NADPH + H(+). The protein operates within amino-acid biosynthesis; L-proline biosynthesis; L-glutamate 5-semialdehyde from L-glutamate: step 2/2. In terms of biological role, catalyzes the NADPH-dependent reduction of L-glutamate 5-phosphate into L-glutamate 5-semialdehyde and phosphate. The product spontaneously undergoes cyclization to form 1-pyrroline-5-carboxylate. This is Gamma-glutamyl phosphate reductase from Listeria welshimeri serovar 6b (strain ATCC 35897 / DSM 20650 / CCUG 15529 / CIP 8149 / NCTC 11857 / SLCC 5334 / V8).